The chain runs to 314 residues: Taste receptor type 2 member 42 (314 aa).

The Extracellular segment spans residues 1–7; it reads MPTELDK. A helical membrane pass occupies residues 8-28; the sequence is IFLILAIVEFIIGLLGNVFIG. The Cytoplasmic segment spans residues 29-50; sequence LVNCSEGIKNQKVFSADFILTC. A helical transmembrane segment spans residues 51–71; the sequence is LAISTIGQLLVILFDSFLVGL. Topologically, residues 72-101 are extracellular; it reads ASHLYTTYRLGKLVILLWHMTNHLTTWLAT. Residues 102 to 122 traverse the membrane as a helical segment; that stretch reads CLSIFYFFKIAHFPHSLFLWL. At 123–127 the chain is on the cytoplasmic side; that stretch reads RWRMN. Residues 128–148 form a helical membrane-spanning segment; the sequence is GMIVMLRTLSLFLLIFDSLVL. Over 149-187 the chain is Extracellular; the sequence is KLFIDISLNIIDKSNLTLYFDESKTLYDKLSILKTLLSL. A glycan (N-linked (GlcNAc...) asparagine) is linked at Asn163. Residues 188–208 form a helical membrane-spanning segment; it reads TSFIPFSLSLTSLLFLFLSLV. Residues 209-238 are Cytoplasmic-facing; it reads RHTRNLKLSSLGSRDSSTEAHRRAMKMVMS. Residues 239–259 traverse the membrane as a helical segment; it reads FLFLFIVHFFSLQVANWIFFM. The Extracellular segment spans residues 260-265; it reads SWNNKY. A helical transmembrane segment spans residues 266 to 286; sequence IKFVMLALNAFPSCHSFILIL. Residues 287 to 314 lie on the Cytoplasmic side of the membrane; sequence GNSKLRQTAVRLLSHLRNYTKTSNPLPL.

This sequence belongs to the G-protein coupled receptor T2R family.

The protein localises to the membrane. Its function is as follows. Receptor that may play a role in the perception of bitterness and is gustducin-linked. May play a role in sensing the chemical composition of the gastrointestinal content. The activity of this receptor may stimulate alpha gustducin, mediate PLC-beta-2 activation and lead to the gating of TRPM5. This Pongo pygmaeus (Bornean orangutan) protein is Taste receptor type 2 member 42 (TAS2R42).